The chain runs to 198 residues: Heme oxygenase PigA (198 aa).

Histidine 26 is a binding site for heme b.

The protein belongs to the heme oxygenase family.

It carries out the reaction heme b + 3 AH2 + 3 O2 + 2 H(+) = biliverdin IXbeta + CO + Fe(2+) + 3 A + 3 H2O. The enzyme catalyses heme b + 3 AH2 + 3 O2 + 3 H(+) = biliverdin IXdelta + CO + Fe(2+) + 3 A + 3 H2O. Its function is as follows. Involved in heme degradation. Catalyzes the degradation of heme to biliverdin, with the release of iron. Forms biliverdin delta (70%) and beta (30%). Under anaerobic conditions ferredoxin--NADP(+) reductase (fpr) can provide the necessary electrons; Bfd is not required. The chain is Heme oxygenase PigA from Pseudomonas aeruginosa (strain ATCC 15692 / DSM 22644 / CIP 104116 / JCM 14847 / LMG 12228 / 1C / PRS 101 / PAO1).